The chain runs to 154 residues: 6,7-dimethyl-8-ribityllumazine synthase (154 aa).

5-amino-6-(D-ribitylamino)uracil is bound by residues phenylalanine 22, 56–58 (AFE), and 81–83 (VLI). 86 to 87 (ET) lines the (2S)-2-hydroxy-3-oxobutyl phosphate pocket. Catalysis depends on histidine 89, which acts as the Proton donor. Residue phenylalanine 114 participates in 5-amino-6-(D-ribitylamino)uracil binding. Arginine 128 provides a ligand contact to (2S)-2-hydroxy-3-oxobutyl phosphate.

It belongs to the DMRL synthase family.

The catalysed reaction is (2S)-2-hydroxy-3-oxobutyl phosphate + 5-amino-6-(D-ribitylamino)uracil = 6,7-dimethyl-8-(1-D-ribityl)lumazine + phosphate + 2 H2O + H(+). Its pathway is cofactor biosynthesis; riboflavin biosynthesis; riboflavin from 2-hydroxy-3-oxobutyl phosphate and 5-amino-6-(D-ribitylamino)uracil: step 1/2. In terms of biological role, catalyzes the formation of 6,7-dimethyl-8-ribityllumazine by condensation of 5-amino-6-(D-ribitylamino)uracil with 3,4-dihydroxy-2-butanone 4-phosphate. This is the penultimate step in the biosynthesis of riboflavin. The chain is 6,7-dimethyl-8-ribityllumazine synthase from Chlamydia abortus (strain DSM 27085 / S26/3) (Chlamydophila abortus).